The chain runs to 629 residues: Hemocyanin C chain (629 aa).

6 residues coordinate Cu cation: H175, H179, H206, H326, H330, and H366. N-linked (GlcNAc...) asparagine glycosylation occurs at N451. The cysteines at positions 537 and 585 are disulfide-linked. N618 carries N-linked (GlcNAc...) asparagine glycosylation.

It belongs to the tyrosinase family. Hemocyanin subfamily. In terms of assembly, tarantula hemocyanin is a 24-chain polymer with seven different chains identified. In terms of tissue distribution, hemolymph.

Its subcellular location is the secreted. It localises to the extracellular space. Functionally, hemocyanins are copper-containing oxygen carriers occurring freely dissolved in the hemolymph of many mollusks and arthropods. In Aphonopelma sp. (American tarantula), this protein is Hemocyanin C chain (HCC).